We begin with the raw amino-acid sequence, 189 residues long: Peptide deformylase (189 aa).

Fe cation-binding residues include cysteine 93 and histidine 135. The active site involves glutamate 136. Histidine 139 contributes to the Fe cation binding site.

This sequence belongs to the polypeptide deformylase family. Fe(2+) is required as a cofactor.

It catalyses the reaction N-terminal N-formyl-L-methionyl-[peptide] + H2O = N-terminal L-methionyl-[peptide] + formate. Removes the formyl group from the N-terminal Met of newly synthesized proteins. Requires at least a dipeptide for an efficient rate of reaction. N-terminal L-methionine is a prerequisite for activity but the enzyme has broad specificity at other positions. In Karelsulcia muelleri (strain GWSS) (Sulcia muelleri), this protein is Peptide deformylase.